A 161-amino-acid chain; its full sequence is Serine-protein kinase RsbW (161 aa).

It belongs to the anti-sigma-factor family.

It catalyses the reaction L-seryl-[protein] + ATP = O-phospho-L-seryl-[protein] + ADP + H(+). The catalysed reaction is L-threonyl-[protein] + ATP = O-phospho-L-threonyl-[protein] + ADP + H(+). Functionally, negative regulator of sigma-B activity. Phosphorylates and inactivates its specific antagonist protein, RsbV. Upon phosphorylation of RsbV, RsbW is released and binds to sigma-B, thereby blocking its ability to form an RNA polymerase holoenzyme (E-sigma-B). The protein is Serine-protein kinase RsbW of Bacillus licheniformis (strain ATCC 14580 / DSM 13 / JCM 2505 / CCUG 7422 / NBRC 12200 / NCIMB 9375 / NCTC 10341 / NRRL NRS-1264 / Gibson 46).